We begin with the raw amino-acid sequence, 105 residues long: Large ribosomal subunit protein eL30 (105 aa).

Belongs to the eukaryotic ribosomal protein eL30 family.

The sequence is that of Large ribosomal subunit protein eL30 (RPL30) from Trypanosoma brucei brucei.